The primary structure comprises 823 residues: Lon protease (823 aa).

Residues 51-246 (IPILPLRNMV…RLLFILNREY (196 aa)) enclose the Lon N-terminal domain. 397–404 (GPPGVGKT) serves as a coordination point for ATP. The 183-residue stretch at 633–815 (NDYAGVVTGL…QQVVDLALLR (183 aa)) folds into the Lon proteolytic domain. Residues S721 and K764 contribute to the active site.

Belongs to the peptidase S16 family. In terms of assembly, homohexamer. Organized in a ring with a central cavity.

The protein resides in the cytoplasm. It catalyses the reaction Hydrolysis of proteins in presence of ATP.. Its function is as follows. ATP-dependent serine protease that mediates the selective degradation of mutant and abnormal proteins as well as certain short-lived regulatory proteins. Required for cellular homeostasis and for survival from DNA damage and developmental changes induced by stress. Degrades polypeptides processively to yield small peptide fragments that are 5 to 10 amino acids long. Binds to DNA in a double-stranded, site-specific manner. The chain is Lon protease from Parabacteroides distasonis (strain ATCC 8503 / DSM 20701 / CIP 104284 / JCM 5825 / NCTC 11152).